The following is a 353-amino-acid chain: tRNA-cytidine(32) 2-sulfurtransferase (353 aa).

The short motif at 49–54 (SGGKDS) is the PP-loop motif element. Residues C124, C127, and C215 each coordinate [4Fe-4S] cluster.

Belongs to the TtcA family. As to quaternary structure, homodimer. Mg(2+) is required as a cofactor. It depends on [4Fe-4S] cluster as a cofactor.

It is found in the cytoplasm. It carries out the reaction cytidine(32) in tRNA + S-sulfanyl-L-cysteinyl-[cysteine desulfurase] + AH2 + ATP = 2-thiocytidine(32) in tRNA + L-cysteinyl-[cysteine desulfurase] + A + AMP + diphosphate + H(+). The protein operates within tRNA modification. Its function is as follows. Catalyzes the ATP-dependent 2-thiolation of cytidine in position 32 of tRNA, to form 2-thiocytidine (s(2)C32). The sulfur atoms are provided by the cysteine/cysteine desulfurase (IscS) system. This chain is tRNA-cytidine(32) 2-sulfurtransferase, found in Sodalis glossinidius (strain morsitans).